We begin with the raw amino-acid sequence, 290 residues long: Carbonic anhydrase-related protein (290 aa).

The residue at position 5 (S5) is a Phosphoserine. An Alpha-carbonic anhydrase domain is found at 27–289 (VEWGYEEGVE…LSDRVIRAAF (263 aa)). H87 acts as the Proton donor/acceptor in catalysis. Zn(2+)-binding residues include H118 and H141.

This sequence belongs to the alpha-carbonic anhydrase family.

Its function is as follows. Does not have a carbonic anhydrase catalytic activity. The sequence is that of Carbonic anhydrase-related protein (Ca8) from Rattus norvegicus (Rat).